The primary structure comprises 230 residues: Extracellular deoxyribonuclease (230 aa).

An N-terminal signal peptide occupies residues 1 to 20; that stretch reads MFRPLLSLCLALLVSAPAHA.

The protein belongs to the EndA/NucM nuclease family.

It localises to the secreted. The sequence is that of Extracellular deoxyribonuclease (dns) from Aeromonas hydrophila.